A 699-amino-acid polypeptide reads, in one-letter code: Elongation factor G 1 (699 aa).

Positions 8-290 constitute a tr-type G domain; it reads EHYRNIGICA…AVIEFLPSPS (283 aa). GTP contacts are provided by residues 17–24, 88–92, and 142–145; these read AHVDAGKT, DTPGH, and NKMD.

It belongs to the TRAFAC class translation factor GTPase superfamily. Classic translation factor GTPase family. EF-G/EF-2 subfamily.

Its subcellular location is the cytoplasm. Functionally, catalyzes the GTP-dependent ribosomal translocation step during translation elongation. During this step, the ribosome changes from the pre-translocational (PRE) to the post-translocational (POST) state as the newly formed A-site-bound peptidyl-tRNA and P-site-bound deacylated tRNA move to the P and E sites, respectively. Catalyzes the coordinated movement of the two tRNA molecules, the mRNA and conformational changes in the ribosome. This chain is Elongation factor G 1, found in Vibrio parahaemolyticus serotype O3:K6 (strain RIMD 2210633).